Consider the following 286-residue polypeptide: D-tagatose-1,6-bisphosphate aldolase subunit KbaY (286 aa).

The Proton donor role is filled by aspartate 82. Zn(2+) contacts are provided by histidine 83 and histidine 180. Glycine 181 contributes to the dihydroxyacetone phosphate binding site. Histidine 208 serves as a coordination point for Zn(2+). Dihydroxyacetone phosphate-binding positions include 209–211 and 230–233; these read GAS and NVAT.

It belongs to the class II fructose-bisphosphate aldolase family. TagBP aldolase KbaY subfamily. Homotetramer. Forms a complex with KbaZ. Zn(2+) is required as a cofactor.

The catalysed reaction is D-tagatofuranose 1,6-bisphosphate = D-glyceraldehyde 3-phosphate + dihydroxyacetone phosphate. It participates in carbohydrate metabolism; D-tagatose 6-phosphate degradation; D-glyceraldehyde 3-phosphate and glycerone phosphate from D-tagatose 6-phosphate: step 2/2. Its function is as follows. Catalytic subunit of the tagatose-1,6-bisphosphate aldolase KbaYZ, which catalyzes the reversible aldol condensation of dihydroxyacetone phosphate (DHAP or glycerone-phosphate) with glyceraldehyde 3-phosphate (G3P) to produce tagatose 1,6-bisphosphate (TBP). Requires KbaZ subunit for full activity and stability. Is involved in the catabolism of N-acetylgalactosamine and D-galactosamine. This is D-tagatose-1,6-bisphosphate aldolase subunit KbaY (kbaY) from Escherichia coli.